Here is an 89-residue protein sequence, read N- to C-terminus: Cell division topological specificity factor (89 aa).

Belongs to the MinE family.

Prevents the cell division inhibition by proteins MinC and MinD at internal division sites while permitting inhibition at polar sites. This ensures cell division at the proper site by restricting the formation of a division septum at the midpoint of the long axis of the cell. The sequence is that of Cell division topological specificity factor from Yersinia pestis bv. Antiqua (strain Angola).